The chain runs to 232 residues: ATP-dependent Clp protease proteolytic subunit 2 (232 aa).

Ser124 functions as the Nucleophile in the catalytic mechanism. His149 is a catalytic residue.

This sequence belongs to the peptidase S14 family. Fourteen ClpP subunits assemble into 2 heptameric rings which stack back to back to give a disk-like structure with a central cavity, resembling the structure of eukaryotic proteasomes.

The protein resides in the cytoplasm. The catalysed reaction is Hydrolysis of proteins to small peptides in the presence of ATP and magnesium. alpha-casein is the usual test substrate. In the absence of ATP, only oligopeptides shorter than five residues are hydrolyzed (such as succinyl-Leu-Tyr-|-NHMec, and Leu-Tyr-Leu-|-Tyr-Trp, in which cleavage of the -Tyr-|-Leu- and -Tyr-|-Trp bonds also occurs).. In terms of biological role, cleaves peptides in various proteins in a process that requires ATP hydrolysis. Has a chymotrypsin-like activity. Plays a major role in the degradation of misfolded proteins. The polypeptide is ATP-dependent Clp protease proteolytic subunit 2 (Nostoc sp. (strain PCC 7120 / SAG 25.82 / UTEX 2576)).